We begin with the raw amino-acid sequence, 387 residues long: Chaperone protein DnaJ (387 aa).

The J domain maps to 4 to 68; the sequence is DFYDVLGVSR…EKRQMYDQLG (65 aa). Positions 76–135 are disordered; it reads EKRGGVGGGGNSSGGSARGDPFGGMGGQGSPFGDIFEQFFGGGQGQRRQGNRPRQGQNLQ. The segment covering 80 to 105 has biased composition (gly residues); sequence GVGGGGNSSGGSARGDPFGGMGGQGS. Residues 121–133 are compositionally biased toward low complexity; the sequence is QRRQGNRPRQGQN. A CR-type zinc finger spans residues 148–230; that stretch reads GVEKQFTVRR…CNGDGVTRQE (83 aa). Cysteine 161, cysteine 164, cysteine 178, cysteine 181, cysteine 204, cysteine 207, cysteine 218, and cysteine 221 together coordinate Zn(2+). 4 CXXCXGXG motif repeats span residues 161–168, 178–185, 204–211, and 218–225; these read CPDCNGRG, CPQCNGQG, CPRCDGSG, and CSTCNGDG.

This sequence belongs to the DnaJ family. In terms of assembly, homodimer. The cofactor is Zn(2+).

It localises to the cytoplasm. Its function is as follows. Participates actively in the response to hyperosmotic and heat shock by preventing the aggregation of stress-denatured proteins and by disaggregating proteins, also in an autonomous, DnaK-independent fashion. Unfolded proteins bind initially to DnaJ; upon interaction with the DnaJ-bound protein, DnaK hydrolyzes its bound ATP, resulting in the formation of a stable complex. GrpE releases ADP from DnaK; ATP binding to DnaK triggers the release of the substrate protein, thus completing the reaction cycle. Several rounds of ATP-dependent interactions between DnaJ, DnaK and GrpE are required for fully efficient folding. Also involved, together with DnaK and GrpE, in the DNA replication of plasmids through activation of initiation proteins. The chain is Chaperone protein DnaJ from Haloquadratum walsbyi (strain DSM 16790 / HBSQ001).